Consider the following 389-residue polypeptide: P2X purinoceptor 4a (389 aa).

The Cytoplasmic portion of the chain corresponds to 1 to 36 (MSESVGCCDSVSQCFFDYYTSKILIIRSKKVGTLNR). A helical membrane pass occupies residues 37 to 57 (FTQALVIAYVIGYVCVYNKGY). Residues 58–343 (QDTDTVLSSV…NIIPTLLNMG (286 aa)) lie on the Extracellular side of the membrane. ATP-binding residues include lysine 70 and lysine 72. Residues lysine 70 and lysine 72 each coordinate CTP. Asparagine 78 and asparagine 113 each carry an N-linked (GlcNAc...) asparagine glycan. Intrachain disulfides connect cysteine 119–cysteine 168, cysteine 129–cysteine 152, and cysteine 135–cysteine 162. Residue arginine 143 coordinates CTP. The N-linked (GlcNAc...) asparagine glycan is linked to asparagine 187. ATP-binding residues include threonine 189 and leucine 191. Threonine 189 contacts CTP. N-linked (GlcNAc...) asparagine glycosylation occurs at asparagine 213. Intrachain disulfides connect cysteine 220-cysteine 230 and cysteine 264-cysteine 273. Asparagine 296, arginine 298, and lysine 316 together coordinate ATP. The CTP site is built by asparagine 296, arginine 298, and lysine 316. Residues 344-364 (AGLALLGLVNVICDWIVLTFM) form a helical membrane-spanning segment. Topologically, residues 365-389 (KRKQHYKEQKYTYVDDFGLLHNEDK) are cytoplasmic.

Belongs to the P2X receptor family. As to quaternary structure, functional P2XRs are organized as homomeric and heteromeric trimers. Forms homotrimer.

It localises to the cell membrane. Its subcellular location is the lysosome membrane. It catalyses the reaction K(+)(in) = K(+)(out). The catalysed reaction is Na(+)(in) = Na(+)(out). It carries out the reaction Ca(2+)(in) = Ca(2+)(out). Activated by ATP. pH-dependent and inhibited by acidic pH. In terms of biological role, ATP-gated nonselective transmembrane cation channel permeable to potassium, sodium and calcium. CTP, but not GTP or UTP, functions as a weak affinity agonist for P2RX4. Activated by extracellularly released ATP, it plays multiple role in immunity and central nervous system physiology. Could also function as an ATP-gated cation channel of lysosomal membranes. The polypeptide is P2X purinoceptor 4a (p2rx4a) (Danio rerio (Zebrafish)).